We begin with the raw amino-acid sequence, 614 residues long: Phragmoplastin DRP1C (614 aa).

The Dynamin-type G domain occupies 32-301 (WEALPTVAVV…LETVIRQKIP (270 aa)). The segment at 42 to 49 (GGQSSGKS) is G1 motif. A GTP-binding site is contributed by 45-50 (SSGKSS). Positions 68–70 (VTR) are G2 motif. The interval 143–146 (DLPG) is G3 motif. Residues 212 to 215 (TKLD) form a G4 motif region. GTP is bound by residues 213-218 (KLDIMD) and 243-246 (NRSQ). Residues 242–245 (VNRS) are G5 motif. The disordered stretch occupies residues 499–519 (EPEKEKPNPRNAPAPNADPYS). Residues 507–517 (PRNAPAPNADP) show a composition bias toward low complexity. A GED domain is found at 523–614 (FRKIGSNVSA…RDDIDAVAWK (92 aa)).

It belongs to the TRAFAC class dynamin-like GTPase superfamily. Dynamin/Fzo/YdjA family. In terms of assembly, forms homodimer and may homooligomerize and heterooligomerize to form the phragmoplastin complex. Binds to PHIP1. Ubiquitous.

It is found in the cytoplasm. Its subcellular location is the cytoskeleton. It localises to the cell cortex. The protein localises to the cytoplasmic vesicle. The protein resides in the clathrin-coated vesicle. It is found in the phragmoplast. The catalysed reaction is GTP + H2O = GDP + phosphate + H(+). Microtubule-associated force-producing protein that is targeted to the growing edges of the cell plate during cytokinesis. Also plays a major role in plasma membrane maintenance during pollen maturation. Has a GTPase activity. The protein is Phragmoplastin DRP1C of Arabidopsis thaliana (Mouse-ear cress).